The chain runs to 507 residues: Lysine--tRNA ligase (507 aa).

Residues glutamate 406 and glutamate 413 each contribute to the Mg(2+) site.

It belongs to the class-II aminoacyl-tRNA synthetase family. Homodimer. Mg(2+) is required as a cofactor.

The protein localises to the cytoplasm. It catalyses the reaction tRNA(Lys) + L-lysine + ATP = L-lysyl-tRNA(Lys) + AMP + diphosphate. In Wolinella succinogenes (strain ATCC 29543 / DSM 1740 / CCUG 13145 / JCM 31913 / LMG 7466 / NCTC 11488 / FDC 602W) (Vibrio succinogenes), this protein is Lysine--tRNA ligase.